Here is a 395-residue protein sequence, read N- to C-terminus: Neuromedin-U receptor 2 (395 aa).

The Extracellular segment spans residues 1 to 41 (MGKLENASWIHDPLMKYLNSTEEYLAHLCGPKRSDLSLPVS). 2 N-linked (GlcNAc...) asparagine glycosylation sites follow: asparagine 6 and asparagine 19. A helical membrane pass occupies residues 42–62 (VAYALIFLVGVMGNLLVCMVI). Topologically, residues 63–74 (VRHQTLKTPTNY) are cytoplasmic. Residues 75–95 (YLFSLAVSDLLVLLLGMPLEI) traverse the membrane as a helical segment. Topologically, residues 96–115 (YEMWHNYPFLFGPVGCYFKT) are extracellular. A disulfide bond links cysteine 111 and cysteine 196. Residues 116–138 (ALFETVCFASILSVTTVSVERYV) traverse the membrane as a helical segment. The Cytoplasmic segment spans residues 139–157 (AIVHPFRAKLESTRRRALR). A helical transmembrane segment spans residues 158–178 (ILSLVWSFSVVFSLPNTSIHG). The Extracellular portion of the chain corresponds to 179–212 (IKFQHFPNGSSVPGSATCTVTKPMWVYNLIIQAT). An N-linked (GlcNAc...) asparagine glycan is attached at asparagine 186. A helical transmembrane segment spans residues 213–233 (SFLFYILPMTLISVLYYLMGL). At 234 to 257 (RLKRDESLEANKVAVNIHRPSRKS) the chain is on the cytoplasmic side. Residues 258–278 (VTKMLFVLVLVFAICWTPFHV) traverse the membrane as a helical segment. Topologically, residues 279 to 293 (DRLFFSFVEEWTESL) are extracellular. The chain crosses the membrane as a helical span at residues 294–314 (AAVFNLIHVVSGVFFYLSSAV). Residues 315–395 (NPIIYNLLSR…TTAPCAGEVP (81 aa)) are Cytoplasmic-facing. The segment at 374 to 395 (FPGQSSIHNTNLTTAPCAGEVP) is disordered. A compositionally biased stretch (polar residues) spans 375 to 387 (PGQSSIHNTNLTT).

The protein belongs to the G-protein coupled receptor 1 family. In terms of tissue distribution, the highest level is detected in the uterus. In the central nervous system, high expression levels were found in the hypothalamus and moderate levels in both the medulla oblongata and spinal cord. Expressed in the hypothalamic paraventricular nucleus (PVN) and suprachiasmatic nuclei (SCN) of the hypothalamus. Expression is low in the gastrointestinal tract. In other peripheral tissues, moderate expression was observed in the lung and ovary.

It is found in the cell membrane. Its function is as follows. Receptor for the neuromedin-U and neuromedin-S neuropeptides. The protein is Neuromedin-U receptor 2 (Nmur2) of Rattus norvegicus (Rat).